Reading from the N-terminus, the 756-residue chain is Membrane-anchored protein 1 (756 aa).

The first 24 residues, 1 to 24 (MIRNTLAFLAILFLLIPTALLIIG), serve as a signal peptide directing secretion. Asn52 and Asn64 each carry an N-linked (GlcNAc...) asparagine glycan. Helical transmembrane passes span 91–111 (IISAFLSFLSAIFVFFSIFLV), 120–140 (IIVVFITTLLTCLAFAIELVL), and 148–168 (QSYVTAGAIGSDLIAILALCL). The N-linked (GlcNAc...) asparagine glycan is linked to Asn190. A disordered region spans residues 281-328 (YDEFRKSESSPSRSSVLSTSKPEVHETEGYCPHKTGNRPGFPSLNIPR). Over residues 289–300 (SSPSRSSVLSTS) the composition is skewed to low complexity. N-linked (GlcNAc...) asparagine glycosylation is found at Asn396 and Asn407. The interval 427-453 (EPPATRMPQTRSPVNDHSSFPSDLPIK) is disordered. Positions 433 to 447 (MPQTRSPVNDHSSFP) are enriched in polar residues. Phosphoserine is present on Ser438. N-linked (GlcNAc...) asparagine glycans are attached at residues Asn459, Asn470, Asn471, Asn496, Asn497, Asn521, Asn522, Asn547, Asn548, Asn573, Asn574, Asn594, Asn598, Asn599, Asn618, Asn623, Asn649, Asn664, Asn676, and Asn685. Residues 482-650 (MLKNVGNGPR…MPTSPNSRNN (169 aa)) form a disordered region. The segment covering 485–520 (NVGNGPRNAPRNNSSNNLHAQGGMPMNMRGPRGAPR) has biased composition (low complexity). Polar residues-rich tracts occupy residues 593-605 (RNTSRNNSSSEFN), 617-629 (RNASRSNSSTDLF), and 640-650 (GMPTSPNSRNN). Polar residues predominate over residues 686-697 (GSRNPSHGSLNT). Positions 686–713 (GSRNPSHGSLNTAHAGMGYGPRSMMRDP) are disordered. Asn715 carries an N-linked (GlcNAc...) asparagine glycan. A disordered region spans residues 735 to 756 (FELPVRGNRNNRRGPGGNRMIR).

To yeast YOL019W and YMR063W.

The protein resides in the cell membrane. The protein localises to the cell tip. Required for correct cell separation at high temperatures. This chain is Membrane-anchored protein 1 (mac1), found in Schizosaccharomyces pombe (strain 972 / ATCC 24843) (Fission yeast).